The primary structure comprises 61 residues: MARYRHSRSRSRSRYRRRRRRRSRYRSRRRRYRGRRRRRSRRGRRRRGYSRRRYSRRRRRY.

The tract at residues 1–61 (MARYRHSRSR…RRYSRRRRRY (61 aa)) is disordered.

The protein belongs to the protamine P1 family. Testis.

Its subcellular location is the nucleus. It localises to the chromosome. Its function is as follows. Protamines substitute for histones in the chromatin of sperm during the haploid phase of spermatogenesis. They compact sperm DNA into a highly condensed, stable and inactive complex. This is Sperm protamine P1 (PRM1) from Macropus giganteus (Eastern gray kangaroo).